The chain runs to 83 residues: High-potential iron-sulfur protein (83 aa).

[4Fe-4S] cluster-binding residues include Cys43, Cys46, Cys61, and Cys75.

The protein belongs to the high-potential iron-sulfur protein (HiPIP) family. As to quaternary structure, homodimer.

It is found in the periplasm. In terms of biological role, specific class of high-redox-potential 4Fe-4S ferredoxins. Functions in anaerobic electron transport in most purple and in some other photosynthetic bacteria and in at least one genus (Paracoccus) of halophilic, denitrifying bacteria. This chain is High-potential iron-sulfur protein (hip), found in Marichromatium gracile (Chromatium gracile).